Reading from the N-terminus, the 206-residue chain is Ubiquitin-conjugating enzyme E2 S (206 aa).

The 147-residue stretch at 14 to 160 (QTIRQVMKEL…ARMMTEIHAQ (147 aa)) folds into the UBC core domain. Cys98 (glycyl thioester intermediate) is an active-site residue. The segment at 165-191 (GVSDAKDDDGPSNKKHAGLDKKLQDKK) is disordered. Residues 168–191 (DAKDDDGPSNKKHAGLDKKLQDKK) are compositionally biased toward basic and acidic residues.

It belongs to the ubiquitin-conjugating enzyme family.

The enzyme catalyses S-ubiquitinyl-[E1 ubiquitin-activating enzyme]-L-cysteine + [E2 ubiquitin-conjugating enzyme]-L-cysteine = [E1 ubiquitin-activating enzyme]-L-cysteine + S-ubiquitinyl-[E2 ubiquitin-conjugating enzyme]-L-cysteine.. It participates in protein modification; protein ubiquitination. Functionally, catalyzes the covalent attachment of ubiquitin to other proteins. Acts as an essential factor of the anaphase promoting complex/cyclosome (APC/C), a cell cycle-regulated ubiquitin ligase that controls progression through mitosis. Acts by specifically elongating polyubiquitin chains initiated by the E2 enzyme vih/UbcH10 on APC/C substrates, enhancing the degradation of APC/C substrates by the proteasome and promoting mitotic exit. The polypeptide is Ubiquitin-conjugating enzyme E2 S (Drosophila mojavensis (Fruit fly)).